A 233-amino-acid chain; its full sequence is Putative peroxiredoxin (233 aa).

The Thioredoxin domain occupies Ala41–Phe200. The active-site Cysteine sulfenic acid (-SOH) intermediate is Cys87.

This sequence belongs to the peroxiredoxin family. AhpC/Prx1 subfamily. As to quaternary structure, homodimer; disulfide-linked, upon oxidation.

The protein resides in the cell membrane. It catalyses the reaction a hydroperoxide + [thioredoxin]-dithiol = an alcohol + [thioredoxin]-disulfide + H2O. Functionally, thiol-specific peroxidase that catalyzes the reduction of hydrogen peroxide and organic hydroperoxides to water and alcohols, respectively. Plays a role in cell protection against oxidative stress by detoxifying peroxides and as sensor of hydrogen peroxide-mediated signaling events. This Entamoeba histolytica (strain ATCC 30459 / HM-1:IMSS / ABRM) protein is Putative peroxiredoxin.